Consider the following 420-residue polypeptide: Glucose-1-phosphate adenylyltransferase (420 aa).

Residues tyrosine 107, glycine 172, 187-188, and serine 205 contribute to the alpha-D-glucose 1-phosphate site; that span reads EK.

Belongs to the bacterial/plant glucose-1-phosphate adenylyltransferase family. In terms of assembly, homotetramer.

It catalyses the reaction alpha-D-glucose 1-phosphate + ATP + H(+) = ADP-alpha-D-glucose + diphosphate. The protein operates within glycan biosynthesis; glycogen biosynthesis. Involved in the biosynthesis of ADP-glucose, a building block required for the elongation reactions to produce glycogen. Catalyzes the reaction between ATP and alpha-D-glucose 1-phosphate (G1P) to produce pyrophosphate and ADP-Glc. The chain is Glucose-1-phosphate adenylyltransferase from Rhizobium rhizogenes (strain K84 / ATCC BAA-868) (Agrobacterium radiobacter).